A 668-amino-acid chain; its full sequence is Potassium-transporting ATPase ATP-binding subunit (668 aa).

The next 4 helical transmembrane spans lie at 31-51, 62-82, 213-233, and 243-263; these read MFLT…PSFF, FYVA…ISTA, TVFL…IFAI, and IVML…ALLP. Asp298 functions as the 4-aspartylphosphate intermediate in the catalytic mechanism. ATP contacts are provided by residues Asp335, Glu339, 367-374, and Lys385; that span reads FSSETKFS. Asp504 and Asp508 together coordinate Mg(2+). Transmembrane regions (helical) follow at residues 573–593, 599–619, and 644–664; these read YFVI…VNIL, IVAV…LIPL, and IGGV…LIAW.

The protein belongs to the cation transport ATPase (P-type) (TC 3.A.3) family. Type IA subfamily. The system is composed of three essential subunits: KdpA, KdpB and KdpC.

It localises to the cell membrane. It carries out the reaction K(+)(out) + ATP + H2O = K(+)(in) + ADP + phosphate + H(+). Part of the high-affinity ATP-driven potassium transport (or Kdp) system, which catalyzes the hydrolysis of ATP coupled with the electrogenic transport of potassium into the cytoplasm. This subunit is responsible for energy coupling to the transport system and for the release of the potassium ions to the cytoplasm. This Thermoplasma volcanium (strain ATCC 51530 / DSM 4299 / JCM 9571 / NBRC 15438 / GSS1) protein is Potassium-transporting ATPase ATP-binding subunit.